A 189-amino-acid polypeptide reads, in one-letter code: Apolipoprotein D (189 aa).

The signal sequence occupies residues 1–20 (MVMLLLLLSALAGLFGAAEG). A Pyrrolidone carboxylic acid modification is found at glutamine 21. Disulfide bonds link cysteine 28–cysteine 134 and cysteine 61–cysteine 185. N-linked (GlcNAc...) (complex) asparagine glycans are attached at residues asparagine 65 and asparagine 98.

This sequence belongs to the calycin superfamily. Lipocalin family. As to quaternary structure, homodimer. In plasma, also exists as a disulfide-linked heterodimer with APOA2. Post-translationally, N-glycosylated. N-glycan heterogeneity at Asn-65: Hex5HexNAc4 (major) and Hex6HexNAc5 (minor); at Asn-98: Hex5HexNAc4 (minor), dHex1Hex5HexNAc4 (major), dHex1Hex6HexNAc5 (minor) and dHex1Hex7HexNAc6 (minor). As to expression, expressed in liver, intestine, pancreas, kidney, placenta, adrenal, spleen, fetal brain tissue and tears.

The protein localises to the secreted. Its function is as follows. APOD occurs in the macromolecular complex with lecithin-cholesterol acyltransferase. It is probably involved in the transport and binding of bilin. Appears to be able to transport a variety of ligands in a number of different contexts. The sequence is that of Apolipoprotein D (APOD) from Homo sapiens (Human).